Consider the following 116-residue polypeptide: Large ribosomal subunit protein bL17 (116 aa).

The protein belongs to the bacterial ribosomal protein bL17 family. Part of the 50S ribosomal subunit. Contacts protein L32.

The polypeptide is Large ribosomal subunit protein bL17 (Sulfurimonas denitrificans (strain ATCC 33889 / DSM 1251) (Thiomicrospira denitrificans (strain ATCC 33889 / DSM 1251))).